The sequence spans 574 residues: Cholinesterase (574 aa).

Residue N57 is glycosylated (N-linked (GlcNAc...) asparagine). C65 and C92 are oxidised to a cystine. N-linked (GlcNAc...) asparagine glycosylation occurs at N106. Substrate is bound at residue 116 to 117 (GG). S198 (acyl-ester intermediate) is an active-site residue. Position 198 is a phosphoserine (S198). N-linked (GlcNAc...) asparagine glycosylation is found at N241 and N256. Residues C252 and C263 are joined by a disulfide bond. The Charge relay system role is filled by E325. An N-linked (GlcNAc...) asparagine glycan is attached at N341. An intrachain disulfide couples C400 to C519. Catalysis depends on H438, which acts as the Charge relay system. N-linked (GlcNAc...) asparagine glycosylation is found at N455, N481, and N486.

Belongs to the type-B carboxylesterase/lipase family. In terms of assembly, homotetramer; disulfide-linked. Dimer of dimers. As to expression, detected in blood plasma (at protein level). Present in most cells except erythrocytes.

The protein resides in the secreted. The enzyme catalyses an acylcholine + H2O = a carboxylate + choline + H(+). Functionally, esterase with broad substrate specificity. Contributes to the inactivation of the neurotransmitter acetylcholine. Can degrade neurotoxic organophosphate esters. This is Cholinesterase (BCHE) from Equus caballus (Horse).